Reading from the N-terminus, the 1183-residue chain is Peroxisomal ATPase PEX6 (1183 aa).

A disordered region spans residues 161–205 (ESRGKKTGEPEDGPLANGIDLNGVDDSDSDEDVLSQGDDDDENNV). The span at 183-204 (GVDDSDSDEDVLSQGDDDDENN) shows a compositional bias: acidic residues. The interval 576–785 (LPNNYISPVH…VERAMTACSE (210 aa)) is AAA-cassette D1. The tract at residues 878-1070 (GILFYGPPGT…CSDAMLKAIT (193 aa)) is AAA-cassette D2. 883–890 (GPPGTGKT) is an ATP binding site. The interval 1160 to 1183 (IMVDGPGTGGEGAFGDDGDEEGLY) is disordered. The segment covering 1173–1183 (FGDDGDEEGLY) has biased composition (acidic residues).

It belongs to the AAA ATPase family. In terms of assembly, interacts with PEX1; forming the PEX1-PEX6 AAA ATPase complex, which is composed of a heterohexamer formed by a trimer of PEX1-PEX6 dimers.

The protein resides in the cytoplasm. It localises to the cytosol. Its subcellular location is the peroxisome membrane. It carries out the reaction ATP + H2O = ADP + phosphate + H(+). Its function is as follows. Component of the PEX1-PEX6 AAA ATPase complex, a protein dislocase complex that mediates the ATP-dependent extraction of the PEX5 receptor from peroxisomal membranes, an essential step for PEX5 recycling. Specifically recognizes PEX5 monoubiquitinated at 'Cys-6', and pulls it out of the peroxisome lumen through the PEX2-PEX10-PEX12 retrotranslocation channel. Extraction by the PEX1-PEX6 AAA ATPase complex is accompanied by unfolding of the TPR repeats and release of bound cargo from PEX5. Regulates autophagy and biogenesis of peroxisomes and Woronin bodies. Plays important roles in mycelial growth and development and stress response. Is also essential for conidiation and fatty acid utilization. Required for nematode predation via trap formation. In Arthrobotrys oligospora (strain ATCC 24927 / CBS 115.81 / DSM 1491) (Nematode-trapping fungus), this protein is Peroxisomal ATPase PEX6.